A 204-amino-acid chain; its full sequence is CASP-like protein 2U1 (204 aa).

The Cytoplasmic portion of the chain corresponds to 1–36 (MGVLGGDAHVPIGSQVSPGSVVVTNNESFGHRKLLK). The chain crosses the membrane as a helical span at residues 37–57 (GVDFLVRIKAFAFCLAVIVLL). Topologically, residues 58-84 (KNNVQTTVIAPGIVLQAKYNNTKAPVS) are extracellular. N-linked (GlcNAc...) asparagine glycosylation occurs at asparagine 77. A helical membrane pass occupies residues 85–105 (LLVLASICCGYAFLQAVVSLL). The Cytoplasmic portion of the chain corresponds to 106-117 (SFIRDKRVLNNT). The chain crosses the membrane as a helical span at residues 118 to 138 (VLAWLTFLLDQVLTYLLLGSA). The Extracellular segment spans residues 139–170 (AATAEAAYIAKRGEDKVQWKAVCGPFKRFCDH). A helical transmembrane segment spans residues 171–191 (FAATVFLSFIAVIAFAVSAAI). Over 192 to 204 (SAYYLFRRSKGFK) the chain is Cytoplasmic.

It belongs to the Casparian strip membrane proteins (CASP) family. In terms of assembly, homodimer and heterodimers.

The protein resides in the cell membrane. This chain is CASP-like protein 2U1, found in Selaginella moellendorffii (Spikemoss).